Consider the following 627-residue polypeptide: UvrABC system protein C (627 aa).

Residues 22–100 (NNPGVYRMFN…IKRLRPRFNV (79 aa)) enclose the GIY-YIG domain. The region spanning 210–245 (QSVKDHLAAAMQAASADLDFEHAAVYRDRLAALSHV) is the UVR domain.

The protein belongs to the UvrC family. Interacts with UvrB in an incision complex.

It localises to the cytoplasm. The UvrABC repair system catalyzes the recognition and processing of DNA lesions. UvrC both incises the 5' and 3' sides of the lesion. The N-terminal half is responsible for the 3' incision and the C-terminal half is responsible for the 5' incision. The polypeptide is UvrABC system protein C (Brucella abortus biovar 1 (strain 9-941)).